Consider the following 92-residue polypeptide: MSRSIKKGPYVHFKLLKNTNNLNLSNSKRVIKTWSRSSVILPSMVGHTIAVHNGKIHVPIFISDQMVGHKLGEFAFTRSFRSHAKIDKKIRK.

The protein belongs to the universal ribosomal protein uS19 family.

It is found in the plastid. The protein localises to the chloroplast. In terms of biological role, protein S19 forms a complex with S13 that binds strongly to the 16S ribosomal RNA. The chain is Small ribosomal subunit protein uS19c from Cyanidium caldarium (Red alga).